A 325-amino-acid polypeptide reads, in one-letter code: MTFAKITQAAHYVPENVVSNDDLSKIMDTNDEWIYSRTGIKNRHISTGENTSDLATKVAKQLIENSGVDPELIDFIIVATVTPDSMMPSTAARVQAQVGATNAFAYDLTAACSGFVFALSTAEKLISSGAYQRGIVIGAEVFSKVIDWSDRSTAVLFGDGAAGVLLDNSGSQPLIIAEKMQTDGKRGGSLLSSYADIQTPFASVSYEGSNLSMEGRAIFDFAVRDVPKNIQATLEKSDLAAEEIDYYLLHQANSRILDKMAKKLGVTRDKFLQNMQEYGNTSAASIPILLSESVKNGIFSLDGQTKVVLTGFGGGLTWGTAIINL.

Residues Cys-112 and His-250 contribute to the active site. Residues 251–255 form an ACP-binding region; the sequence is QANSR. Asn-280 is a catalytic residue.

It belongs to the thiolase-like superfamily. FabH family. In terms of assembly, homodimer.

The protein resides in the cytoplasm. It catalyses the reaction malonyl-[ACP] + acetyl-CoA + H(+) = 3-oxobutanoyl-[ACP] + CO2 + CoA. It participates in lipid metabolism; fatty acid biosynthesis. Its function is as follows. Catalyzes the condensation reaction of fatty acid synthesis by the addition to an acyl acceptor of two carbons from malonyl-ACP. Catalyzes the first condensation reaction which initiates fatty acid synthesis and may therefore play a role in governing the total rate of fatty acid production. Possesses both acetoacetyl-ACP synthase and acetyl transacylase activities. Its substrate specificity determines the biosynthesis of branched-chain and/or straight-chain of fatty acids. This chain is Beta-ketoacyl-[acyl-carrier-protein] synthase III, found in Lactococcus lactis subsp. cremoris (strain MG1363).